We begin with the raw amino-acid sequence, 641 residues long: Putative phagocytic receptor 1a (641 aa).

The signal sequence occupies residues 1 to 23 (MKINKKQIVFFILFSIFLNHVNG). Residues 24–279 (IFYLPGMIPH…ESNDNSVHWF (256 aa)) are Extracellular-facing. The chain crosses the membrane as a helical span at residues 280 to 300 (SILNSLMIVFILTVMVAMIII). Residues 301–349 (RTLKKDIRRYTSIDTSEDRDSQEETGWKMIHGDVFRPPSHPMLLSVCIG) are Cytoplasmic-facing. The helical transmembrane segment at 350 to 370 (SGVQIFSMTLITMIFAVLGFL) threads the bilayer. Over 371–374 (SPAN) the chain is Extracellular. A helical membrane pass occupies residues 375–395 (IGGLATALIVLFVLSAMFAGY). Residues 396–413 (FSTRVFTIFKGRNWKKNT) are Cytoplasmic-facing. The chain crosses the membrane as a helical span at residues 414–434 (IYTALSMPGIIFGIFFFVNMF). The Extracellular segment spans residues 435-445 (LRGAKSSAAVP). The helical transmembrane segment at 446–466 (FGTFASIIAMWFGISVPLVFL) threads the bilayer. The Cytoplasmic portion of the chain corresponds to 467–502 (GSYFASKKPVPEDPVRTNQIPRQVPDQIWYMNPYLS). The chain crosses the membrane as a helical span at residues 503 to 523 (ILMGGILPFGAVFIELHFILT). The Extracellular segment spans residues 524–532 (SLWDNQFYY). Residues 533–553 (IFGFLFIVLMILIVTSAEISI) form a helical membrane-spanning segment. The Cytoplasmic segment spans residues 554–578 (VMCYFQLCAEDHHWWWRSFLTAGSS). A helical transmembrane segment spans residues 579–599 (SLYMFIYSVSFFRYLGITKFI). Topologically, residues 600 to 608 (SSLLDFSYS) are extracellular. The helical transmembrane segment at 609-629 (FIMSLAFAALTGTIGFYSCYF) threads the bilayer. At 630 to 641 (LVRKIYSSIHIN) the chain is on the cytoplasmic side.

This sequence belongs to the nonaspanin (TM9SF) (TC 9.A.2) family.

It is found in the membrane. Involved in adhesion, phagocytosis of hydrophilic particles and intracellular killing of bacteria. Associates with proteins harboring glycine-rich transmembrane domains and ensures their efficient localization to the cell surface. In Dictyostelium discoideum (Social amoeba), this protein is Putative phagocytic receptor 1a (phg1a).